Here is a 370-residue protein sequence, read N- to C-terminus: MNTGGGQYTDFPAVETHGGQFISYDIFGSLFEITSKYRPPIIPIGRGAYGIVCSVLDTETNELVAMKKIANAFDNHMDAKRTLREIKLLRHLDHENIIAIRDVVPPPLRRQFSDVYISTELMDTDLHQIIRSNQSLSEEHCQYFLYQLLRGLKYIHSANIIHRDLKPSNLLLNANCDLKICDFGLARPTSENDFMTEYVVTRWYRAPELLLNSSDYTAAIDVWSVGCIFMELMNRKPLFPGKDHVHQMRLLTELLGTPTESDLGFTHNEDAKRYIRQLPNFPRQPLAKLFSHVNPMAIDLVDRMLTFDPNRRITVEQALNHQYLAKLHDPNDEPICQKPFSFEFEQQPLDEEQIKEMIYQEAIALNPTYG.

One can recognise a Protein kinase domain in the interval 38 to 324; the sequence is RPPIIPIGRG…VEQALNHQYL (287 aa). ATP is bound by residues 44–52 and lysine 67; that span reads IGRGAYGIV. Aspartate 164 serves as the catalytic Proton acceptor. Threonine 196 carries the post-translational modification Phosphothreonine. Positions 196–198 match the TXY motif; sequence TEY. Tyrosine 198 is modified (phosphotyrosine). The residue at position 201 (threonine 201) is a Phosphothreonine.

Belongs to the protein kinase superfamily. CMGC Ser/Thr protein kinase family. MAP kinase subfamily. In terms of assembly, interacts with DSPTP1B/MKP2, NDPK2 and VIP1. The interaction with DSPTP1B/MKP2 is repressed by fungal elicitation. Binds to LIP5. Interacts with VQ4. Interacts with RACK1A, RACK1B and RACK1C. Interacts with FLZ9. Interacts with MKK5. In terms of processing, dually phosphorylated on Thr-196 and Tyr-198, which activates the enzyme. Dephosphorylated by DSPTP1B/MKP2.

The protein resides in the cytoplasm. It is found in the nucleus. It localises to the cell cortex. The enzyme catalyses L-seryl-[protein] + ATP = O-phospho-L-seryl-[protein] + ADP + H(+). It carries out the reaction L-threonyl-[protein] + ATP = O-phospho-L-threonyl-[protein] + ADP + H(+). Activated by threonine and tyrosine phosphorylation. Activated by MAP kinase kinases MKK4, MKK5, MKK7 and MKK9. Activated in response to hydrogen peroxide, ozone, salt stress and flagellin bacterial elicitor. Triggered by Agrobacterium upon T-DNA transfer. Repressed by DSPTP1B/MKP2-mediated dephosphorylation. Functionally, involved in oxidative stress-mediated signaling cascade (such as ozone). Involved in the innate immune MAP kinase signaling cascade (MEKK1, MKK4/MKK5 and MPK3/MPK6) downstream of bacterial flagellin receptor FLS2. May be involved in hypersensitive response (HR)-mediated signaling cascade by modulating LIP5 phosphorylation and subsequent multivesicular bodies (MVBs) trafficking. May phosphorylate regulators of WRKY transcription factors. Mediates the phosphorylation of VIP1 and subsequent stress genes transcription in response to Agrobacterium. MKK9-MPK3/MPK6 module phosphorylates and activates EIN3, leading to the promotion of EIN3-mediated transcription in ethylene signaling. MPK3/MPK6 cascade regulates camalexin synthesis through transcriptional regulation of the biosynthetic genes after pathogen infection. YDA-MKK4/MKK5-MPK3/MPK6 module regulates stomatal cell fate before the guard mother cell (GMC) is specified. When activated, reinforces the feedback loop by phosphorylating BASL, and inhibits stomatal fate by phosphorylating SPCH. This MAPK cascade also functions downstream of the ER receptor in regulating coordinated local cell proliferation, which shapes the morphology of plant organs. The protein is Mitogen-activated protein kinase 3 of Arabidopsis thaliana (Mouse-ear cress).